We begin with the raw amino-acid sequence, 165 residues long: Methyl-coenzyme M reductase II operon protein D (165 aa).

MCR is composed of three subunits: alpha, beta, and gamma. The function of protein D is not known.

The sequence is that of Methyl-coenzyme M reductase II operon protein D (mrtD) from Methanothermus fervidus (strain ATCC 43054 / DSM 2088 / JCM 10308 / V24 S).